Reading from the N-terminus, the 595-residue chain is Pectinesterase 5 (595 aa).

The signal sequence occupies residues 1–24 (MIGKVVVSVASILLIVGVAIGVVA). N-linked (GlcNAc...) asparagine glycans are attached at residues asparagine 86 and asparagine 206. The segment at 215–239 (SDKGAAPVNKGTPPVADDSPVADPD) is disordered. Over residues 227–239 (PPVADDSPVADPD) the composition is skewed to low complexity. Residues 243 to 246 (RRLL) carry the RRLL cleavage motif motif. Residues 263–266 (RKLM) carry the RKLM cleavage motif motif. A glycan (N-linked (GlcNAc...) asparagine) is linked at asparagine 349. Substrate-binding residues include threonine 360 and glutamine 390. Aspartate 413 (proton donor) is an active-site residue. The Nucleophile role is filled by aspartate 434. Residues arginine 503 and tryptophan 505 each contribute to the substrate site.

In the N-terminal section; belongs to the PMEI family. It in the C-terminal section; belongs to the pectinesterase family. As to quaternary structure, interacts with SBT6.1. Expressed in pollen grains and pollen tubes.

Its subcellular location is the cell membrane. It is found in the secreted. It localises to the cell wall. The protein resides in the golgi apparatus membrane. The catalysed reaction is [(1-&gt;4)-alpha-D-galacturonosyl methyl ester](n) + n H2O = [(1-&gt;4)-alpha-D-galacturonosyl](n) + n methanol + n H(+). It participates in glycan metabolism; pectin degradation; 2-dehydro-3-deoxy-D-gluconate from pectin: step 1/5. Acts in the modification of cell walls via demethylesterification of cell wall pectin. Plays an important role in growth of pollen tubes in female floral tissues, possibly via enhancing the interaction between the pollen tube and female floral tissues by modification of the cell walls. May be regulated by MYB80 during anther development and play a role in tapetum and pollen development. The chain is Pectinesterase 5 (PME5) from Arabidopsis thaliana (Mouse-ear cress).